Here is a 260-residue protein sequence, read N- to C-terminus: Mitochondrial import inner membrane translocase subunit Tim29 (260 aa).

A mitochondrion-targeting transit peptide spans 1–31; the sequence is MAAAALRRFWSRRRAEAGDAVVAKPGVWARL. Topologically, residues 32–59 are mitochondrial matrix; it reads GSWARALLRDYAEACRDASAEARARPGR. The helical transmembrane segment at 60 to 77 threads the bilayer; that stretch reads AAVYVGLLGGAAACFTLA. The Mitochondrial intermembrane portion of the chain corresponds to 78 to 260; it reads PSEGAFEEAL…HSLVQAEAPR (183 aa).

As to quaternary structure, component of the TIM22 complex, which core is composed of TIMM22, associated with TIMM10 (TIMM10A and/or TIMM10B), TIMM9, AGK and TIMM29. Interacts with TIMM10B; the interaction is direct. Interacts with TOMM40; linking the TIM22 complex to the TOM complex. Interacts with TIMM22 (when oxidized); the interaction is direct.

The protein localises to the mitochondrion inner membrane. Component of the TIM22 complex, a complex that mediates the import and insertion of multi-pass transmembrane proteins into the mitochondrial inner membrane. The TIM22 complex forms a twin-pore translocase that uses the membrane potential as the external driving force. Required for the stability of the TIM22 complex and functions in the assembly of the TIMM22 protein into the TIM22 complex. May facilitate cooperation between TIM22 and TOM complexes by interacting with TOMM40. The protein is Mitochondrial import inner membrane translocase subunit Tim29 of Homo sapiens (Human).